A 188-amino-acid chain; its full sequence is Mitochondrial import receptor subunit TOM20-1 (188 aa).

Residues 1 to 164 (MDKLNFFEEI…VVKNKKSSDE (164 aa)) are Cytoplasmic-facing. A helical membrane pass occupies residues 165 to 182 (KYIVMGWVILAIGVVACI). The Mitochondrial intermembrane portion of the chain corresponds to 183-188 (SFRKLR).

Belongs to the Tom20 family. In terms of assembly, forms part of the preprotein translocase complex of the outer mitochondrial membrane (TOM complex) which consists of at least 6 different proteins (TOM5, TOM6, TOM7, TOM20, TOM22/TOM9 and TOM40). Component of a mitochondrial large protein complex that contains, at least, MIC60, DGS1, TOM40, TOM20 proteins, and petC/RISP. Barely detected in roots.

It is found in the mitochondrion outer membrane. In terms of biological role, central component of the receptor complex responsible for the recognition and translocation of cytosolically synthesized mitochondrial preproteins. Together with TOM22 functions as the transit peptide receptor at the surface of the mitochondrion outer membrane and facilitates the movement of preproteins into the translocation pore. The sequence is that of Mitochondrial import receptor subunit TOM20-1 from Arabidopsis thaliana (Mouse-ear cress).